The primary structure comprises 396 residues: Tryptophan synthase beta chain (396 aa).

Lys86 is subject to N6-(pyridoxal phosphate)lysine.

Belongs to the TrpB family. Tetramer of two alpha and two beta chains. Pyridoxal 5'-phosphate serves as cofactor.

It catalyses the reaction (1S,2R)-1-C-(indol-3-yl)glycerol 3-phosphate + L-serine = D-glyceraldehyde 3-phosphate + L-tryptophan + H2O. The protein operates within amino-acid biosynthesis; L-tryptophan biosynthesis; L-tryptophan from chorismate: step 5/5. Its function is as follows. The beta subunit is responsible for the synthesis of L-tryptophan from indole and L-serine. This chain is Tryptophan synthase beta chain, found in Francisella tularensis subsp. tularensis (strain FSC 198).